A 342-amino-acid chain; its full sequence is Probable tyrosine--tRNA ligase, cytoplasmic (342 aa).

An L-tyrosine-binding site is contributed by Tyr-48. The 'HIGH' region motif lies at 53–61 (ITGKPHIGY). Tyr-175, Gln-179, Asp-182, and Gln-197 together coordinate L-tyrosine. Positions 231-235 (KMSSS) match the 'KMSKS' region motif.

Belongs to the class-I aminoacyl-tRNA synthetase family. Homodimer.

The protein resides in the cytoplasm. It carries out the reaction tRNA(Tyr) + L-tyrosine + ATP = L-tyrosyl-tRNA(Tyr) + AMP + diphosphate + H(+). The chain is Probable tyrosine--tRNA ligase, cytoplasmic from Enterocytozoon bieneusi (strain H348) (Microsporidian parasite).